The sequence spans 361 residues: 5-formaminoimidazole-4-carboxamide-1-(beta)-D-ribofuranosyl 5'-monophosphate synthetase (361 aa).

5-amino-1-(5-phospho-beta-D-ribosyl)imidazole-4-carboxamide is bound by residues histidine 27 and serine 94. The 233-residue stretch at 116 to 348 (RAILRWEAER…MGQRIAKEIK (233 aa)) folds into the ATP-grasp domain. Residues 146 to 208 (PDEI…ANYC) and glutamate 230 each bind ATP. Asparagine 258 contacts 5-amino-1-(5-phospho-beta-D-ribosyl)imidazole-4-carboxamide. Positions 297 and 310 each coordinate Mg(2+).

The protein belongs to the phosphohexose mutase family. Requires Mg(2+) as cofactor. The cofactor is Mn(2+).

It carries out the reaction 5-amino-1-(5-phospho-beta-D-ribosyl)imidazole-4-carboxamide + formate + ATP = 5-formamido-1-(5-phospho-D-ribosyl)imidazole-4-carboxamide + ADP + phosphate. It participates in purine metabolism; IMP biosynthesis via de novo pathway; 5-formamido-1-(5-phospho-D-ribosyl)imidazole-4-carboxamide from 5-amino-1-(5-phospho-D-ribosyl)imidazole-4-carboxamide (formate route): step 1/1. In terms of biological role, catalyzes the ATP- and formate-dependent formylation of 5-aminoimidazole-4-carboxamide-1-beta-d-ribofuranosyl 5'-monophosphate (AICAR) to 5-formaminoimidazole-4-carboxamide-1-beta-d-ribofuranosyl 5'-monophosphate (FAICAR) in the absence of folates. In Methanococcus maripaludis (strain DSM 14266 / JCM 13030 / NBRC 101832 / S2 / LL), this protein is 5-formaminoimidazole-4-carboxamide-1-(beta)-D-ribofuranosyl 5'-monophosphate synthetase.